A 401-amino-acid chain; its full sequence is Nodal homolog 3-C (401 aa).

The first 18 residues, 1 to 18 (MAFLSLFLCLVFSSPLMA), serve as a signal peptide directing secretion. The propeptide occupies 19 to 274 (MPPALQGRKA…KVNGFRRLRR (256 aa)). 3 N-linked (GlcNAc...) asparagine glycosylation sites follow: Asn-168, Asn-337, and Asn-344. 2 disulfide bridges follow: Cys-299-Cys-365 and Cys-328-Cys-396.

It belongs to the TGF-beta family. Monomer. The propeptide region interacts with bmp4 in a non-covalent manner. Expressed in the dorsal marginal region of late blastula, becoming restricted to the Spemann organizer at the early gastrula stage.

Its subcellular location is the secreted. Exhibits mesoderm-dorsalizing activity and neural-inducing activity, but lacks mesoderm-inducing activity. Regulates the expression of specific mesodermal and neural genes. Induces convergent extension movements at the embryonic midline by activating the fgf signaling pathway to induce t/bra expression in the organizer region. Acts with wnt11 to induce Spemann organizer cells and induce axis formation. The unprocessed protein antagonizes bmp-signaling. The sequence is that of Nodal homolog 3-C from Xenopus tropicalis (Western clawed frog).